The primary structure comprises 810 residues: Lon protease (810 aa).

Residues 8–201 (LPLLPLRGIL…KLCGIVAKEL (194 aa)) form the Lon N-terminal domain. An ATP-binding site is contributed by 353-360 (GPPGVGKT). Positions 589 to 770 (NDEVGTVTGM…DQVLAIALLE (182 aa)) constitute a Lon proteolytic domain. Catalysis depends on residues S676 and K719.

This sequence belongs to the peptidase S16 family. Homohexamer. Organized in a ring with a central cavity.

The protein localises to the cytoplasm. The enzyme catalyses Hydrolysis of proteins in presence of ATP.. Its function is as follows. ATP-dependent serine protease that mediates the selective degradation of mutant and abnormal proteins as well as certain short-lived regulatory proteins. Required for cellular homeostasis and for survival from DNA damage and developmental changes induced by stress. Degrades polypeptides processively to yield small peptide fragments that are 5 to 10 amino acids long. Binds to DNA in a double-stranded, site-specific manner. This chain is Lon protease, found in Desulforamulus reducens (strain ATCC BAA-1160 / DSM 100696 / MI-1) (Desulfotomaculum reducens).